The following is a 250-amino-acid chain: 1-(5-phosphoribosyl)-5-[(5-phosphoribosylamino)methylideneamino] imidazole-4-carboxamide isomerase (250 aa).

D8 (proton acceptor) is an active-site residue. The active-site Proton donor is D131.

It belongs to the HisA/HisF family.

Its subcellular location is the cytoplasm. The enzyme catalyses 1-(5-phospho-beta-D-ribosyl)-5-[(5-phospho-beta-D-ribosylamino)methylideneamino]imidazole-4-carboxamide = 5-[(5-phospho-1-deoxy-D-ribulos-1-ylimino)methylamino]-1-(5-phospho-beta-D-ribosyl)imidazole-4-carboxamide. Its pathway is amino-acid biosynthesis; L-histidine biosynthesis; L-histidine from 5-phospho-alpha-D-ribose 1-diphosphate: step 4/9. In Paraburkholderia xenovorans (strain LB400), this protein is 1-(5-phosphoribosyl)-5-[(5-phosphoribosylamino)methylideneamino] imidazole-4-carboxamide isomerase.